The following is a 582-amino-acid chain: 15-cis-phytoene desaturase, chloroplastic/chromoplastic (582 aa).

Residues 1–93 constitute a chloroplast and chromoplast transit peptide; that stretch reads MNLLGSISTG…ELENTINFLE (93 aa). FAD contacts are provided by residues Ala-121, 140-141, Lys-148, 165-166, and Tyr-171; these read EA and HI. Arg-306 provides a ligand contact to substrate. Asp-537 serves as a coordination point for FAD. Ala-545 lines the substrate pocket. Residue Met-547 participates in FAD binding.

This sequence belongs to the carotenoid/retinoid oxidoreductase family. As to quaternary structure, homotetramer. It depends on FAD as a cofactor. Expressed in flower buds and lips. Lower expression in leaves and roots.

It is found in the plastid. The protein resides in the chloroplast. Its subcellular location is the chromoplast. It localises to the membrane. It catalyses the reaction 2 a plastoquinone + 15-cis-phytoene = 9,9',15-tri-cis-zeta-carotene + 2 a plastoquinol. The protein operates within carotenoid biosynthesis; lycopene biosynthesis. In terms of biological role, converts phytoene into zeta-carotene via the intermediary of phytofluene by the symmetrical introduction of two double bonds at the C-11 and C-11' positions of phytoene with a concomitant isomerization of two neighboring double bonds at the C9 and C9' positions from trans to cis. This is 15-cis-phytoene desaturase, chloroplastic/chromoplastic (PDS) from Oncidium hybrid cultivar (Orchid).